The sequence spans 271 residues: 2-dehydro-3-deoxyphosphooctonate aldolase (271 aa).

It belongs to the KdsA family.

It localises to the cytoplasm. The enzyme catalyses D-arabinose 5-phosphate + phosphoenolpyruvate + H2O = 3-deoxy-alpha-D-manno-2-octulosonate-8-phosphate + phosphate. It functions in the pathway carbohydrate biosynthesis; 3-deoxy-D-manno-octulosonate biosynthesis; 3-deoxy-D-manno-octulosonate from D-ribulose 5-phosphate: step 2/3. It participates in bacterial outer membrane biogenesis; lipopolysaccharide biosynthesis. This Campylobacter jejuni subsp. jejuni serotype O:6 (strain 81116 / NCTC 11828) protein is 2-dehydro-3-deoxyphosphooctonate aldolase.